The chain runs to 208 residues: Ribosome maturation factor RimM (208 aa).

Residues 98–205 (ADEFYVPDLI…IIEITPPDGL (108 aa)) enclose the PRC barrel domain. The interval 154 to 174 (LPSKSKRSRDTKNQKKNQSPP) is disordered.

This sequence belongs to the RimM family. As to quaternary structure, binds ribosomal protein uS19.

The protein resides in the cytoplasm. Its function is as follows. An accessory protein needed during the final step in the assembly of 30S ribosomal subunit, possibly for assembly of the head region. Essential for efficient processing of 16S rRNA. May be needed both before and after RbfA during the maturation of 16S rRNA. It has affinity for free ribosomal 30S subunits but not for 70S ribosomes. The chain is Ribosome maturation factor RimM from Trichodesmium erythraeum (strain IMS101).